A 266-amino-acid polypeptide reads, in one-letter code: Glutamate racemase (266 aa).

Substrate contacts are provided by residues 10 to 11 (DS) and 42 to 43 (YG). Cys-73 functions as the Proton donor/acceptor in the catalytic mechanism. A substrate-binding site is contributed by 74–75 (NT). The Proton donor/acceptor role is filled by Cys-183. 184-185 (TH) is a substrate binding site.

The protein belongs to the aspartate/glutamate racemases family.

It carries out the reaction L-glutamate = D-glutamate. Its pathway is cell wall biogenesis; peptidoglycan biosynthesis. Provides the (R)-glutamate required for cell wall biosynthesis. This is Glutamate racemase from Lactobacillus johnsonii (strain CNCM I-12250 / La1 / NCC 533).